The following is a 197-amino-acid chain: FMN-dependent NADH:quinone oxidoreductase (197 aa).

FMN is bound by residues S10 and 16–18; that span reads SIS.

This sequence belongs to the azoreductase type 1 family. As to quaternary structure, homodimer. Requires FMN as cofactor.

The enzyme catalyses 2 a quinone + NADH + H(+) = 2 a 1,4-benzosemiquinone + NAD(+). The catalysed reaction is N,N-dimethyl-1,4-phenylenediamine + anthranilate + 2 NAD(+) = 2-(4-dimethylaminophenyl)diazenylbenzoate + 2 NADH + 2 H(+). Its function is as follows. Quinone reductase that provides resistance to thiol-specific stress caused by electrophilic quinones. In terms of biological role, also exhibits azoreductase activity. Catalyzes the reductive cleavage of the azo bond in aromatic azo compounds to the corresponding amines. The sequence is that of FMN-dependent NADH:quinone oxidoreductase from Erythrobacter litoralis (strain HTCC2594).